The sequence spans 612 residues: Elongation factor 4 (612 aa).

The tr-type G domain occupies 11–193; that stretch reads NHIRNFSIVA…KIVTDIPAPS (183 aa). Residues 23-28 and 140-143 each bind GTP; these read DHGKST and NKID.

Belongs to the TRAFAC class translation factor GTPase superfamily. Classic translation factor GTPase family. LepA subfamily.

It is found in the cell membrane. It carries out the reaction GTP + H2O = GDP + phosphate + H(+). Functionally, required for accurate and efficient protein synthesis under certain stress conditions. May act as a fidelity factor of the translation reaction, by catalyzing a one-codon backward translocation of tRNAs on improperly translocated ribosomes. Back-translocation proceeds from a post-translocation (POST) complex to a pre-translocation (PRE) complex, thus giving elongation factor G a second chance to translocate the tRNAs correctly. Binds to ribosomes in a GTP-dependent manner. The protein is Elongation factor 4 of Lactobacillus acidophilus (strain ATCC 700396 / NCK56 / N2 / NCFM).